The chain runs to 315 residues: Olfactory receptor 4A5 (315 aa).

Topologically, residues 1-23 are extracellular; the sequence is MRQNNNITEFVLLGFSQDPGVQK. Asn-6 is a glycosylation site (N-linked (GlcNAc...) asparagine). A helical transmembrane segment spans residues 24–47; the sequence is ALFVMFLLTYLVTVVGNLLIVVDI. At 48–55 the chain is on the cytoplasmic side; the sequence is IASPSLGS. A helical transmembrane segment spans residues 56–77; that stretch reads PMYFFLACLSFIDAAYSTTISP. At 78 to 98 the chain is on the extracellular side; it reads KLIVGLFCDKKTISFQGCMGQ. Cys-95 and Cys-186 are disulfide-bonded. A helical membrane pass occupies residues 99–118; sequence LFIDHFFGGAEVFLLVVMAC. Residues 119–137 lie on the Cytoplasmic side of the membrane; it reads DRYVAICKPLHYLTIMNRQ. A helical transmembrane segment spans residues 138 to 156; it reads VCFLLLVVAMIGGFVHSAF. Topologically, residues 157–192 are extracellular; that stretch reads QIVVYSLPFCGPNVIVHFSCDMHPLLELACTDTYFI. Residues 193–216 form a helical membrane-spanning segment; sequence GLTVVVNSGAICMVIFNLLLISYG. Topologically, residues 217–232 are cytoplasmic; that stretch reads VILSSLKTYSQEKRGK. The chain crosses the membrane as a helical span at residues 233–255; sequence ALSTCSSGSTVVVLFFVPCIFIY. Over 256–266 the chain is Extracellular; sequence VRPVSNFPTDK. The helical transmembrane segment at 267–286 threads the bilayer; the sequence is FMTVFYTIITHMLSPLIYTL. The Cytoplasmic portion of the chain corresponds to 287 to 315; that stretch reads RNSEMRNAIEKLLGKKLTIFIIGGVSVLM.

Belongs to the G-protein coupled receptor 1 family.

It is found in the cell membrane. Its function is as follows. Odorant receptor. This Homo sapiens (Human) protein is Olfactory receptor 4A5 (OR4A5).